An 807-amino-acid chain; its full sequence is MGKKWIVFFAYLLLSSFFISSSSAGITKESPLPIGQTLSSSNGFYELGFFNFNNSQNQYVGIWFKGIIPRVVVWVANREKPVTDSTANLAISNNGSLLLFNGKHGVAWSSGEALVSNGSRAELSDTGNLIVIDNFSGRTLWQSFDHLGDTMLPSSTLKYNLATGEKQVLSSWKSYTDPSVGDFVLQITPQVPTQVLVTKGSTPYYRSGPWAKTRFTGIPLMDDTFTGPVSVQQDTNGSGSLTYLNRNDRLQRTMLTSKGTQELSWHNGTDWVLNFVAPEHSCDYYGVCGPFGLCVKSVPPKCTCFKGFVPKLIEEWKRGNWTGGCVRRTELYCQGNSTGKYANVFHPVARIKPPDFYEFASFVNVEECQKSCLHNCSCLAFAYIDGIGCLMWNQDLMDAVQFSEGGELLSIRLARSELGGNKRKKAITASIVSLSLVVIIAFVAFCFWRYRVKHNADITTDASQVSWRNDLKPQDVPGLDFFDMHTIQTATNNFSISNKLGQGGFGPVYKGKLQDGKEIAVKRLSSSSGQGKEEFMNEIVLISKLQHKNLVRILGCCIEGEEKLLIYEFMLNNSLDTFLFDSRKRLEIDWPKRLDIIQGIARGIHYLHRDSHLKVIHRDLKVSNILLDEKMNPKISDFGLARMYQGTEYQDNTRRVVGTLGYMAPEYAWTGMFSEKSDIYSFGVLMLEIISGEKISRFSYGKEEKTLIAYAWESWCDTGGIDLLDKDVADSCRPLEVERCVQIGLLCVQHQPADRPNTLELLSMLTTTSDLPPPEQPTFVVHRRDDKSSSEDLITVNEMTKSVILGR.

Residues 1 to 24 form the signal peptide; sequence MGKKWIVFFAYLLLSSFFISSSSA. The 120-residue stretch at 25–144 folds into the Bulb-type lectin domain; sequence GITKESPLPI…FSGRTLWQSF (120 aa). Residues 25-426 are Extracellular-facing; the sequence is GITKESPLPI…ELGGNKRKKA (402 aa). N-linked (GlcNAc...) asparagine glycosylation is found at Asn53, Asn94, Asn117, Asn134, Asn236, and Asn267. Positions 278 to 314 constitute an EGF-like; atypical domain; sequence PEHSCDYYGVCGPFGLCVKSVPPKCTCFKGFVPKLIE. Intrachain disulfides connect Cys282–Cys294 and Cys288–Cys302. Asn320, Asn336, and Asn375 each carry an N-linked (GlcNAc...) asparagine glycan. Residues 333–413 form the PAN domain; it reads CQGNSTGKYA…EGGELLSIRL (81 aa). Cystine bridges form between Cys368/Cys389 and Cys372/Cys378. Residues 427-447 form a helical membrane-spanning segment; the sequence is ITASIVSLSLVVIIAFVAFCF. The Cytoplasmic segment spans residues 448 to 807; sequence WRYRVKHNAD…EMTKSVILGR (360 aa). Residues 494–779 form the Protein kinase domain; sequence FSISNKLGQG…DLPPPEQPTF (286 aa). ATP contacts are provided by residues 500-508 and Lys522; that span reads LGQGGFGPV. Residues Ser528 and Ser543 each carry the phosphoserine modification. Residues 583 to 600 form a caM-binding region; that stretch reads RKRLEIDWPKRLDIIQGI. The Proton acceptor role is filled by Asp619. Phosphoserine is present on residues Ser623 and Ser636. Thr653 carries the post-translational modification Phosphothreonine. Ser696 and Ser790 each carry phosphoserine.

Belongs to the protein kinase superfamily. Ser/Thr protein kinase family.

The protein resides in the cell membrane. It carries out the reaction L-seryl-[protein] + ATP = O-phospho-L-seryl-[protein] + ADP + H(+). The catalysed reaction is L-threonyl-[protein] + ATP = O-phospho-L-threonyl-[protein] + ADP + H(+). The protein is G-type lectin S-receptor-like serine/threonine-protein kinase At1g61420 of Arabidopsis thaliana (Mouse-ear cress).